We begin with the raw amino-acid sequence, 432 residues long: MAGLGLGSAVPVWLAEDDLGCIICQGLLDWPATLPCGHSFCRHCLEALWGARDARRWACPTCRQGAAQQPHLRKNTLLQDLADKYRRAAREIQAGSDPAHCPCPGSSSLSSAAARPRRRPELQRVAVEKSITEVAQELTELVEHLVDIVRSLQNQRPLSESGPDNELSILGKAFSSGVDLSMASPKLVTSDTAAGKIRDILHDLEEIQEKLQESVTWKEAPEAQMQGELLEAPSSSSCPLPDQSHPALRRASRFAQWAIHPTFNLKSLSCSLEVSKDSRTVTVSHRPQPYRWSCERFSTSQVLCSQALSSGKHYWEVDTRNCSHWAVGVASWEMSRDQVLGRTMDSCCVEWKGTSQLSAWHMVKETVLGSDRPGVVGIWLNLEEGKLAFYSVDNQEKLLYECTISASSPLYPAFWLYGLHPGNYLIIKQVKV.

The segment at 21–63 (CIICQGLLDWPATLPCGHSFCRHCLEALWGARDARRWACPTCR) adopts an RING-type zinc-finger fold. The interval 95-121 (GSDPAHCPCPGSSSLSSAAARPRRRPE) is disordered. A compositionally biased stretch (low complexity) spans 102 to 114 (PCPGSSSLSSAAA). 2 coiled-coil regions span residues 121 to 156 (ELQRVAVEKSITEVAQELTELVEHLVDIVRSLQNQR) and 191 to 216 (DTAAGKIRDILHDLEEIQEKLQESVT). The 192-residue stretch at 241–432 (PDQSHPALRR…NYLIIKQVKV (192 aa)) folds into the B30.2/SPRY domain.

In terms of assembly, homodimer. Interacts (homodimer) with RIGI (double-stranded RNA-bound oligomeric form); involved in both RIGI ubiquitination, oligomerization into filaments associated with viral RNAs and the bridging of these filaments. Interacts with UBE2D3 and UBE2N; E2 ubiquitin ligases involved in RNF135-mediated ubiquitination of RIGI and activation of the RIG-I signaling pathway. Interacts with PCBP2. (Microbial infection) Cleaved and inactivated by hepatitis C virus NS3/NS4A. Expressed in skeletal muscle, spleen, kidney, placenta, prostate, stomach, thyroid and tongue. Also weakly expressed in heart, thymus, liver and lung.

It localises to the cytoplasm. The protein localises to the stress granule. The catalysed reaction is S-ubiquitinyl-[E2 ubiquitin-conjugating enzyme]-L-cysteine + [acceptor protein]-L-lysine = [E2 ubiquitin-conjugating enzyme]-L-cysteine + N(6)-ubiquitinyl-[acceptor protein]-L-lysine.. It participates in protein modification; protein ubiquitination. E2-dependent E3 ubiquitin-protein ligase that functions as a RIGI coreceptor in the sensing of viral RNAs in cell cytoplasm and the activation of the antiviral innate immune response. Together with the UBE2D3, UBE2N and UB2V1 E2 ligases, catalyzes the 'Lys-63'-linked polyubiquitination of RIGI oligomerized on viral RNAs, an essential step in the activation of the RIG-I signaling pathway. Through a ubiquitin-independent parallel mechanism, which consists in bridging RIGI filaments forming on longer viral RNAs, further activates the RIG-I signaling pathway. This second mechanism that synergizes with the ubiquitin-dependent one would thereby allow an RNA length-dependent regulation of the RIG-I signaling pathway. Associated with the E2 ligase UBE2N, also constitutively synthesizes unanchored 'Lys-63'-linked polyubiquitin chains that may also activate the RIG-I signaling pathway. In Homo sapiens (Human), this protein is E3 ubiquitin-protein ligase RNF135.